The chain runs to 85 residues: F(1)-ATPase inhibitor IF(1), mitochondrial (85 aa).

The N-terminal 22 residues, 1-22, are a transit peptide targeting the mitochondrion; that stretch reads MLPRSALARSLQLQRGVAARFY. Residues 41-84 are a coiled coil; sequence KRERATEDFFVRQREKEQLRHLKEQLEKQRKKIDSLENKIDSMT.

The protein belongs to the ATPase inhibitor family. Monomer and homodimer. The protein aggregates less strongly with increasing pH.

The protein localises to the mitochondrion. Its function is as follows. Endogenous ATPase inhibitor, which inhibits specifically the reverse ATPase reaction of mitochondrial F(1)F(0)-type ATP synthase. It limits ATP depletion when the mitochondrial membrane potential falls below a threshold and the F(1)F(0)-ATP synthase starts hydrolyzing ATP to pump protons out of the mitochondrial matrix. Required to avoid the consumption of cellular ATP when the F(1)F(0)-ATP synthase enzyme acts as an ATP hydrolase. Functions through inserting its N-terminal part into the catalytically active F1-ATPase, thereby blocking its rotational movement and subsequently the ATP hydrolase activity. This is F(1)-ATPase inhibitor IF(1), mitochondrial (INH1) from Saccharomyces cerevisiae (strain ATCC 204508 / S288c) (Baker's yeast).